A 2053-amino-acid polypeptide reads, in one-letter code: Integrator complex subunit 1 (2053 aa).

Disordered stretches follow at residues 36–58 and 249–285; these read KILP…ALAS and SLPS…ESEP. Residues 268 to 283 show a composition bias toward polar residues; sequence DNSTQSLDASPLNTES. Residues 708–728 traverse the membrane as a helical segment; that stretch reads LAIIAFYWKAWLILLMISAHN.

This sequence belongs to the Integrator subunit 1 family. Belongs to the multiprotein complex Integrator, at least composed of IntS1, IntS2, IntS3, IntS4, omd/IntS5, IntS6, defl/IntS7, IntS8, IntS9, IntS10, IntS11, IntS12, asun/IntS13, IntS14 and IntS15. The core complex associates with protein phosphatase 2A subunits mts/PP2A and Pp2A-29B, to form the Integrator-PP2A (INTAC) complex. Within the complex, interacts with IntS12 and IntS9. Interaction with IntS12 is likely to be important for promoting 3'-end processing of snRNAs. Interacts with Mediator complex members Cdk8 and CycC.

The protein resides in the nucleus membrane. The protein localises to the nucleus. In terms of biological role, component of the integrator complex, a multiprotein complex that terminates RNA polymerase II (Pol II) transcription in the promoter-proximal region of genes. The integrator complex provides a quality checkpoint during transcription elongation by driving premature transcription termination of transcripts that are unfavorably configured for transcriptional elongation: the complex terminates transcription by (1) catalyzing dephosphorylation of the C-terminal domain (CTD) of Pol II subunit Polr2A/Rbp1 and Spt5, and (2) degrading the exiting nascent RNA transcript via endonuclease activity. The integrator complex is also involved in the 3'-end processing of the U7 snRNA, and also the spliceosomal snRNAs U1, U2, U4 and U5. Required for the normal expression of the Integrator complex component IntS12. The protein is Integrator complex subunit 1 of Drosophila melanogaster (Fruit fly).